A 118-amino-acid chain; its full sequence is Acidic phospholipase A2 (118 aa).

Positions 25, 27, and 29 each coordinate Ca(2+). Residue H45 is part of the active site. A Ca(2+)-binding site is contributed by D46. D86 is an active-site residue.

This sequence belongs to the phospholipase A2 family. Group II subfamily. D49 sub-subfamily. Ca(2+) is required as a cofactor. Post-translationally, six disulfide bonds are present. As to expression, expressed by the venom gland.

The protein localises to the secreted. It carries out the reaction a 1,2-diacyl-sn-glycero-3-phosphocholine + H2O = a 1-acyl-sn-glycero-3-phosphocholine + a fatty acid + H(+). PLA2 catalyzes the calcium-dependent hydrolysis of the 2-acyl groups in 3-sn-phosphoglycerides. The protein is Acidic phospholipase A2 of Bitis gabonica (Gaboon adder).